The sequence spans 166 residues: Phosphopantetheine adenylyltransferase (166 aa).

Ser9 provides a ligand contact to substrate. Residues 9–10 (SY) and His17 contribute to the ATP site. Positions 41, 75, and 89 each coordinate substrate. ATP-binding positions include 90–92 (GLR), Glu100, and 124–130 (LEHISSS).

Belongs to the bacterial CoaD family. As to quaternary structure, homohexamer. It depends on Mg(2+) as a cofactor.

It localises to the cytoplasm. The catalysed reaction is (R)-4'-phosphopantetheine + ATP + H(+) = 3'-dephospho-CoA + diphosphate. Its pathway is cofactor biosynthesis; coenzyme A biosynthesis; CoA from (R)-pantothenate: step 4/5. In terms of biological role, reversibly transfers an adenylyl group from ATP to 4'-phosphopantetheine, yielding dephospho-CoA (dPCoA) and pyrophosphate. This Bifidobacterium longum (strain DJO10A) protein is Phosphopantetheine adenylyltransferase.